The primary structure comprises 190 residues: MALVLMVVGLGNPGPRYATTRHNAGFMVVDLLADDLGITLDRTREQALTGQGLVGNNRVLLVKPQTYMNNSGQAVAPLARWYGIAPEAILVIHDDLDLAPGRLRLRRGGSSGGHRGLQSIITHLGTTAVPRLKIGIGRPPLGQNVIDYVLKPFSEGDWELIRPVLLEAARAARFLLEGGSMDEAMNRFNH.

Y17 contacts tRNA. The Proton acceptor role is filled by H22. 2 residues coordinate tRNA: Y67 and N69.

Belongs to the PTH family. Monomer.

The protein resides in the cytoplasm. It carries out the reaction an N-acyl-L-alpha-aminoacyl-tRNA + H2O = an N-acyl-L-amino acid + a tRNA + H(+). Functionally, hydrolyzes ribosome-free peptidyl-tRNAs (with 1 or more amino acids incorporated), which drop off the ribosome during protein synthesis, or as a result of ribosome stalling. Its function is as follows. Catalyzes the release of premature peptidyl moieties from peptidyl-tRNA molecules trapped in stalled 50S ribosomal subunits, and thus maintains levels of free tRNAs and 50S ribosomes. This Moorella thermoacetica (strain ATCC 39073 / JCM 9320) protein is Peptidyl-tRNA hydrolase.